Here is an 88-residue protein sequence, read N- to C-terminus: Large ribosomal subunit protein eL20 (88 aa).

It belongs to the eukaryotic ribosomal protein eL20 family. In terms of assembly, part of the 50S ribosomal subunit. Binds 23S rRNA.

This is Large ribosomal subunit protein eL20 from Aeropyrum pernix (strain ATCC 700893 / DSM 11879 / JCM 9820 / NBRC 100138 / K1).